Here is a 367-residue protein sequence, read N- to C-terminus: Quinolinate synthase (367 aa).

The iminosuccinate site is built by histidine 45 and serine 62. Cysteine 109 is a [4Fe-4S] cluster binding site. Residues 140–142 and serine 161 contribute to the iminosuccinate site; that span reads YVN. Residue cysteine 229 coordinates [4Fe-4S] cluster. Iminosuccinate contacts are provided by residues 255-257 and threonine 272; that span reads HPE. Cysteine 319 serves as a coordination point for [4Fe-4S] cluster.

It belongs to the quinolinate synthase family. Type 3 subfamily. [4Fe-4S] cluster is required as a cofactor.

The protein resides in the cytoplasm. The catalysed reaction is iminosuccinate + dihydroxyacetone phosphate = quinolinate + phosphate + 2 H2O + H(+). It functions in the pathway cofactor biosynthesis; NAD(+) biosynthesis; quinolinate from iminoaspartate: step 1/1. Catalyzes the condensation of iminoaspartate with dihydroxyacetone phosphate to form quinolinate. The chain is Quinolinate synthase from Geobacillus kaustophilus (strain HTA426).